Here is a 114-residue protein sequence, read N- to C-terminus: Large ribosomal subunit protein eL30 (114 aa).

Belongs to the eukaryotic ribosomal protein eL30 family.

This Branchiostoma belcheri (Amphioxus) protein is Large ribosomal subunit protein eL30 (RPL30).